The chain runs to 202 residues: Ribosome maturation factor RimP (202 aa).

This sequence belongs to the RimP family.

The protein localises to the cytoplasm. Its function is as follows. Required for maturation of 30S ribosomal subunits. The sequence is that of Ribosome maturation factor RimP from Polaromonas naphthalenivorans (strain CJ2).